The chain runs to 622 residues: Dopamine beta-hydroxylase (622 aa).

Residues methionine 1–arginine 20 lie on the Cytoplasmic side of the membrane. The helical; Signal-anchor for type II membrane protein transmembrane segment at glutamate 21–leucine 41 threads the bilayer. Residues arginine 42–alanine 621 lie on the Intragranular side of the membrane. Residues glycine 61–leucine 177 form the DOMON domain. N-linked (GlcNAc...) asparagine glycosylation is found at asparagine 68 and asparagine 188. 6 cysteine pairs are disulfide-bonded: cysteine 158-cysteine 600, cysteine 236-cysteine 287, cysteine 273-cysteine 299, cysteine 394-cysteine 507, cysteine 398-cysteine 569, and cysteine 470-cysteine 492. The active site involves tyrosine 234. Histidine 266 and histidine 267 together coordinate Cu(2+). A Cu(2+)-binding site is contributed by histidine 337. Serine 350 bears the Phosphoserine; by CaMK mark. Histidine 416 is a catalytic residue. Positions 416 and 418 each coordinate Cu(2+). N-linked (GlcNAc...) asparagine glycosylation is present at asparagine 476. Residue methionine 491 coordinates Cu(2+). N-linked (GlcNAc...) asparagine glycosylation is present at asparagine 570. A disordered region spans residues glutamate 594–glutamate 622. Positions arginine 603–isoleucine 615 are enriched in polar residues.

The protein belongs to the copper type II ascorbate-dependent monooxygenase family. In terms of assembly, homotetramer; composed of two disulfide-linked dimers. Cu(2+) is required as a cofactor. Proteolytic cleavage after the membrane-anchor leads to the release of the soluble form. In terms of processing, N-glycosylated. Detected in adrenal gland secretory granules (at protein level). Detected in adrenal gland.

Its subcellular location is the cytoplasmic vesicle. The protein resides in the secretory vesicle lumen. It is found in the secretory vesicle. It localises to the chromaffin granule lumen. The protein localises to the secretory vesicle membrane. Its subcellular location is the chromaffin granule membrane. The catalysed reaction is dopamine + 2 L-ascorbate + O2 = (R)-noradrenaline + 2 monodehydro-L-ascorbate radical + H2O. Its pathway is catecholamine biosynthesis; (R)-noradrenaline biosynthesis; (R)-noradrenaline from dopamine: step 1/1. In terms of biological role, catalyzes the hydroxylation of dopamine to noradrenaline (also known as norepinephrine), and is thus vital for regulation of these neurotransmitters. In Mus musculus (Mouse), this protein is Dopamine beta-hydroxylase (Dbh).